An 862-amino-acid chain; its full sequence is MARQGCFGSYQVISLFTFAIGVNLCLGFTASRIKRAEWDEGPPTVLSDSPWTNTSGSCKGRCFELQEVGPPDCRCDNLCKSYSSCCHDFDELCLKTARGWECTKDRCGEVRNEENACHCSEDCLSRGDCCTNYQVVCKGESHWVDDDCEEIRVPECPAGFVRPPLIIFSVDGFRASYMKKGSKVMPNIEKLRSCGTHAPYMRPVYPTKTFPNLYTLATGLYPESHGIVGNSMYDPVFDATFHLRGREKFNHRWWGGQPLWITATKQGVRAGTFFWSVSIPHERRILTILQWLSLPDNERPSVYAFYSEQPDFSGHKYGPFGPEMTNPLREIDKTVGQLMDGLKQLKLHRCVNVIFVGDHGMEDVTCDRTEFLSNYLTNVDDITLVPGTLGRIRPKIPNNLKYDPKAIIANLTCKKPDQHFKPYMKQHLPKRLHYANNRRIEDLHLLVERRWHVARKPLDVYKKPSGKCFFQGDHGFDNKVNSMQTVFVGYGPTFKYRTKVPPFENIELYNVMCDLLGLKPAPNNGTHGSLNHLLRTNTFRPTLPEEVSRPNYPGIMYLQSDFDLGCTCDDKVEPKNKLEELNKRLHTKGSTEERHLLYGRPAVLYRTSYDILYHTDFESGYSEIFLMPLWTSYTISKQAEVSSIPEHLTNCVRPDVRVSPGFSQNCLAYKNDKQMSYGFLFPPYLSSSPEAKYDAFLVTNMVPMYPAFKRVWTYFQRVLVKKYASERNGVNVISGPIFDYNYNGLRDIEDEIKQYVEGSSIPVPTHYYSIITSCLDFTQPADKCDGPLSVSSFILPHRPDNDESCNSSEDESKWVEELMKMHTARVRDIEHLTGLDFYRKTSRSYSEILTLKTYLHTYESEI.

Positions 1–27 (MARQGCFGSYQVISLFTFAIGVNLCLG) are cleaved as a signal peptide. The propeptide at 28–35 (FTASRIKR) is removed by furin. Asn-53 carries N-linked (GlcNAc...) asparagine glycosylation. SMB domains are found at residues 54-97 (TSGS…LKTA) and 98-142 (RGWE…GESH). 10 cysteine pairs are disulfide-bonded: Cys-58/Cys-75, Cys-62/Cys-93, Cys-73/Cys-86, Cys-79/Cys-85, Cys-102/Cys-119, Cys-107/Cys-137, Cys-117/Cys-130, Cys-123/Cys-129, Cys-148/Cys-194, and Cys-156/Cys-350. The Cell attachment site motif lies at 126–128 (RGD). Positions 144-501 (VDDDCEEIRV…PTFKYRTKVP (358 aa)) are phosphodiesterase domain. Positions 171 and 209 each coordinate Zn(2+). Catalysis depends on Thr-209, which acts as the Nucleophile. 3 residues coordinate 1-(9Z-octadecenoyl)-sn-glycero-3-phosphate: Thr-209, Asn-230, and Asp-311. Residues Thr-209, Asn-230, and Asp-311 each contribute to the 1-hexadecanoyl-sn-glycero-3-phosphate site. 1-tetradecanoyl-sn-glycerol 3-phosphate contacts are provided by Thr-209, Asn-230, and Asp-311. Zn(2+)-binding residues include Asp-311, His-315, Asp-358, and His-359. Intrachain disulfides connect Cys-366–Cys-468, Cys-413–Cys-805, Cys-566–Cys-666, Cys-568–Cys-651, and Cys-774–Cys-784. N-linked (GlcNAc...) asparagine glycosylation occurs at Asn-410. His-474 contributes to the Zn(2+) binding site. His-474 is a binding site for 1-(9Z-octadecenoyl)-sn-glycero-3-phosphate. A 1-hexadecanoyl-sn-glycero-3-phosphate-binding site is contributed by His-474. His-474 contacts 1-tetradecanoyl-sn-glycerol 3-phosphate. An N-linked (GlcNAc...) asparagine glycan is attached at Asn-524. The nuclease-like domain stretch occupies residues 597 to 862 (LYGRPAVLYR…TYLHTYESEI (266 aa)). Ca(2+) contacts are provided by Asp-739, Asn-741, Asn-743, Leu-745, and Asp-747. N-linked (GlcNAc...) asparagine glycosylation is present at Asn-806. Residues 829–850 (IEHLTGLDFYRKTSRSYSEILT) form a required for secretion region.

Belongs to the nucleotide pyrophosphatase/phosphodiesterase family. Zn(2+) is required as a cofactor. It depends on Ca(2+) as a cofactor. In terms of processing, N-glycosylation, but not furin-cleavage, plays a critical role on secretion and on lysoPLD activity. Secretion requires simultaneous glycosylation on Asn-53 and Asn-410, while probable glycosylation of Asn-410 has a preferential role on lysoPLD activity. Not O-glycosylated. Post-translationally, the interdomain disulfide bond between Cys-413 and Cys-805 is essential for catalytic activity. Expressed in brain and adipose tissue.

It is found in the secreted. The catalysed reaction is a 1-O-alkyl-sn-glycero-3-phosphoethanolamine + H2O = a 1-O-alkyl-sn-glycero-3-phosphate + ethanolamine + H(+). It catalyses the reaction a 1-acyl-sn-glycero-3-phosphoethanolamine + H2O = a 1-acyl-sn-glycero-3-phosphate + ethanolamine + H(+). It carries out the reaction 1-(9Z-octadecenoyl)-sn-glycero-3-phosphoethanolamine + H2O = 1-(9Z-octadecenoyl)-sn-glycero-3-phosphate + ethanolamine + H(+). The enzyme catalyses a 1-O-alkyl-sn-glycero-3-phosphocholine + H2O = a 1-O-alkyl-sn-glycero-3-phosphate + choline + H(+). The catalysed reaction is 1-O-(9Z-octadecenyl)-sn-glycero-3-phosphocholine + H2O = 1-O-(9Z-octadecenyl)-sn-glycero-3-phosphate + choline + H(+). It catalyses the reaction 1-O-hexadecyl-sn-glycero-3-phosphocholine + H2O = 1-O-hexadecyl-sn-glycero-3-phosphate + choline + H(+). It carries out the reaction a 1-O-(1Z-alkenyl)-sn-glycero-3-phosphocholine + H2O = a 1-O-(1Z-alkenyl)-sn-glycero-3-phosphate + choline + H(+). The enzyme catalyses a 1-acyl-sn-glycero-3-phosphocholine + H2O = a 1-acyl-sn-glycero-3-phosphate + choline + H(+). The catalysed reaction is 1-dodecanoyl-sn-glycero-3-phosphocholine + H2O = 1-dodecanoyl-sn-glycerol 3-phosphate + choline + H(+). It catalyses the reaction 1-(9Z-octadecenoyl)-sn-glycero-3-phosphocholine + H2O = 1-(9Z-octadecenoyl)-sn-glycero-3-phosphate + choline + H(+). It carries out the reaction 1-tetradecanoyl-sn-glycero-3-phosphocholine + H2O = 1-tetradecanoyl-sn-glycerol 3-phosphate + choline + H(+). The enzyme catalyses 1-decanoyl-sn-glycero-3-phosphocholine + H2O = 1-decanoyl-sn-glycero-3-phosphate + choline + H(+). The catalysed reaction is 1-octadecanoyl-sn-glycero-3-phosphocholine + H2O = 1-octadecanoyl-sn-glycero-3-phosphate + choline + H(+). It catalyses the reaction 1-hexadecanoyl-sn-glycero-3-phosphocholine + H2O = 1-hexadecanoyl-sn-glycero-3-phosphate + choline + H(+). It carries out the reaction 1-hexanoyl-sn-glycero-3-phosphocholine + H2O = 1-hexanoyl-sn-glycero-3-phosphate + choline + H(+). The enzyme catalyses 1-(9Z,12Z)-octadecadienoyl-sn-glycero-3-phosphocholine + H2O = 1-(9Z,12Z)-octadecadienoyl-sn-glycero-3-phosphate + choline + H(+). The catalysed reaction is sphing-4-enine-phosphocholine + H2O = sphing-4-enine 1-phosphate + choline + H(+). It catalyses the reaction 1-(5Z,8Z,11Z,14Z-eicosatetraenoyl)-sn-glycero-3-phosphocholine + H2O = 1-(5Z,8Z,11Z,14Z-eicosatetraenoyl)-sn-glycero-3-phosphate + choline + H(+). It carries out the reaction a 2-acyl-sn-glycero-3-phosphocholine + H2O = a 2-acyl-sn-glycerol 3-phosphate + choline + H(+). The enzyme catalyses a 1,2-diacyl-sn-glycero-3-phosphocholine + H2O = a 1,2-diacyl-sn-glycero-3-phosphate + choline + H(+). The catalysed reaction is 1,2-dioctanoyl-sn-glycero-3-phosphocholine + H2O = 1,2-dioctanoyl-sn-glycero-3-phosphate + choline + H(+). It catalyses the reaction 1,2-didecanoyl-sn-glycero-3-phosphocholine + H2O = 1,2-didecanoyl-sn-glycero-3-phosphate + choline + H(+). It carries out the reaction a 1-acyl-sn-glycero-3-phospho-L-serine + H2O = a 1-acyl-sn-glycero-3-phosphate + L-serine + H(+). The enzyme catalyses 1-(9Z-octadecenoyl)-sn-glycero-3-phospho-L-serine + H2O = 1-(9Z-octadecenoyl)-sn-glycero-3-phosphate + L-serine + H(+). The catalysed reaction is a 2-acyl-sn-glycero-3-phospho-L-serine + H2O = a 2-acyl-sn-glycerol 3-phosphate + L-serine + H(+). With respect to regulation, inhibited by EDTA and EGTA. Secreted lysophospholipase D that hydrolyzes lysophospholipids to produce the signaling molecule lysophosphatidic acid (LPA) in extracellular fluids. Its major substrate is lysophosphatidylcholine. Can also act on sphingosylphosphorylcholine producing sphingosine-1-phosphate, a modulator of cell motility. Can hydrolyze, in vitro, bis-pNPP, to some extent pNP-TMP, and barely ATP. Involved in several motility-related processes such as angiogenesis and neurite outgrowth. Acts as an angiogenic factor by stimulating migration of smooth muscle cells and microtubule formation. Stimulates migration of melanoma cells, probably via a pertussis toxin-sensitive G protein. May have a role in induction of parturition. Possible involvement in cell proliferation and adipose tissue development. Required for LPA production in activated platelets, cleaves the sn-1 lysophospholipids to generate sn-1 lysophosphatidic acids containing predominantly 18:2 and 20:4 fatty acids. Shows a preference for the sn-1 to the sn-2 isomer of 1-O-alkyl-sn-glycero-3-phosphocholine (lyso-PAF). This Mus musculus (Mouse) protein is Autotaxin.